Here is a 421-residue protein sequence, read N- to C-terminus: Serine hydroxymethyltransferase (421 aa).

Residues Leu123 and 127 to 129 contribute to the (6S)-5,6,7,8-tetrahydrofolate site; that span reads GHL. Lys232 is modified (N6-(pyridoxal phosphate)lysine).

It belongs to the SHMT family. Homodimer. The cofactor is pyridoxal 5'-phosphate.

The protein resides in the cytoplasm. The enzyme catalyses (6R)-5,10-methylene-5,6,7,8-tetrahydrofolate + glycine + H2O = (6S)-5,6,7,8-tetrahydrofolate + L-serine. Its pathway is one-carbon metabolism; tetrahydrofolate interconversion. It functions in the pathway amino-acid biosynthesis; glycine biosynthesis; glycine from L-serine: step 1/1. Catalyzes the reversible interconversion of serine and glycine with tetrahydrofolate (THF) serving as the one-carbon carrier. This reaction serves as the major source of one-carbon groups required for the biosynthesis of purines, thymidylate, methionine, and other important biomolecules. Also exhibits THF-independent aldolase activity toward beta-hydroxyamino acids, producing glycine and aldehydes, via a retro-aldol mechanism. The sequence is that of Serine hydroxymethyltransferase from Ehrlichia canis (strain Jake).